Here is a 41-residue protein sequence, read N- to C-terminus: MDGLKRYLSSAPILATIWFAITAGILIEFNRFFPDLLFHPL.

Residues tyrosine 7–isoleucine 27 form a helical membrane-spanning segment.

It belongs to the PsaJ family.

The protein resides in the cellular thylakoid membrane. Functionally, may help in the organization of the PsaE and PsaF subunits. In Synechococcus sp. (strain ATCC 27144 / PCC 6301 / SAUG 1402/1) (Anacystis nidulans), this protein is Photosystem I reaction center subunit IX.